We begin with the raw amino-acid sequence, 413 residues long: Serine hydroxymethyltransferase (413 aa).

(6S)-5,6,7,8-tetrahydrofolate is bound by residues leucine 117 and 121 to 123; that span reads GHL. Position 226 is an N6-(pyridoxal phosphate)lysine (lysine 226). Residues glutamate 241 and 349–351 contribute to the (6S)-5,6,7,8-tetrahydrofolate site; that span reads SPF.

This sequence belongs to the SHMT family. As to quaternary structure, homodimer. Pyridoxal 5'-phosphate serves as cofactor.

Its subcellular location is the cytoplasm. It carries out the reaction (6R)-5,10-methylene-5,6,7,8-tetrahydrofolate + glycine + H2O = (6S)-5,6,7,8-tetrahydrofolate + L-serine. Its pathway is one-carbon metabolism; tetrahydrofolate interconversion. The protein operates within amino-acid biosynthesis; glycine biosynthesis; glycine from L-serine: step 1/1. Its function is as follows. Catalyzes the reversible interconversion of serine and glycine with tetrahydrofolate (THF) serving as the one-carbon carrier. This reaction serves as the major source of one-carbon groups required for the biosynthesis of purines, thymidylate, methionine, and other important biomolecules. Also exhibits THF-independent aldolase activity toward beta-hydroxyamino acids, producing glycine and aldehydes, via a retro-aldol mechanism. In Halalkalibacterium halodurans (strain ATCC BAA-125 / DSM 18197 / FERM 7344 / JCM 9153 / C-125) (Bacillus halodurans), this protein is Serine hydroxymethyltransferase.